Here is a 1168-residue protein sequence, read N- to C-terminus: Carbamoyl phosphate synthase arginine-specific large chain, mitochondrial (1168 aa).

The N-terminal 51 residues, 1 to 51, are a transit peptide targeting the mitochondrion; it reads MLSTVHKAGRAPALLRHGRRVPVQASQLRALTSGAQNTSIFQTQANAAQRL. The tract at residues 86–483 is carboxyphosphate synthetic domain; that stretch reads RDHVDVKKVL…SFQKAIRQVD (398 aa). ATP-binding positions include Arg213, 243-298, Arg253, Gly259, Gly260, Lys290, Leu292, Glu297, Gly323, Ile324, His325, Gln366, and Glu380; that span reads ANKI…WKEV. In terms of domain architecture, ATP-grasp 1 spans 217-409; it reads AKALEEINIP…LAYTAAKIGL (193 aa). Residues Gln366, Glu380, and Asn382 each coordinate Mg(2+). Mn(2+) contacts are provided by Gln366, Glu380, and Asn382. Residues 484 to 628 are oligomerization domain; sequence PRFVGFQGDK…YTTYNASSHD (145 aa). A carbamoyl phosphate synthetic domain region spans residues 629–1017; it reads VTFEDKGTVI…AYWASLQSAM (389 aa). An ATP-grasp 2 domain is found at 754-951; sequence SEILDSIGVD…FIDAATKALV (198 aa). ATP is bound by residues 780–837, Arg790, Lys829, Ile831, Glu836, Gly861, Val862, His863, Ser864, Gln904, and Glu922; that span reads AEEV…AQEI. Mg(2+) contacts are provided by Gln904, Glu922, and Asn924. Gln904, Glu922, and Asn924 together coordinate Mn(2+). The tract at residues 1018-1152 is allosteric domain; the sequence is NFRVPEPGEG…AEKLPRPEGI (135 aa). An MGS-like domain is found at 1019–1168; that stretch reads FRVPEPGEGL…WSEFIGGKPL (150 aa).

The protein belongs to the CarB family. Heterodimer composed of 2 chains; the small (or glutamine) chain promotes the hydrolysis of glutamine to ammonia, which is used by the large (or ammonia) chain to synthesize carbamoyl phosphate. The cofactor is Mg(2+). It depends on Mn(2+) as a cofactor.

Its subcellular location is the mitochondrion matrix. It carries out the reaction hydrogencarbonate + L-glutamine + 2 ATP + H2O = carbamoyl phosphate + L-glutamate + 2 ADP + phosphate + 2 H(+). It catalyses the reaction hydrogencarbonate + NH4(+) + 2 ATP = carbamoyl phosphate + 2 ADP + phosphate + 2 H(+). The protein operates within amino-acid biosynthesis; L-arginine biosynthesis; carbamoyl phosphate from bicarbonate: step 1/1. Functionally, large subunit of the arginine-specific carbamoyl phosphate synthase (CPSase). CPSase catalyzes the formation of carbamoyl phosphate from the ammonia moiety of glutamine, hydrogencarbonate, and phosphate donated by ATP, the first step of the arginine biosynthetic pathway. The large subunit (synthetase) binds the substrates ammonia (free or transferred from glutamine from the small subunit), hydrogencarbonate and ATP and carries out an ATP-coupled ligase reaction, activating hydrogencarbonate by forming carboxy phosphate which reacts with ammonia to form carbamoyl phosphate. This chain is Carbamoyl phosphate synthase arginine-specific large chain, mitochondrial (arg-3), found in Neurospora crassa (strain ATCC 24698 / 74-OR23-1A / CBS 708.71 / DSM 1257 / FGSC 987).